The chain runs to 773 residues: DNA polymerase (773 aa).

The N-terminal domain stretch occupies residues M1–G131. Residues E133–A385 are exonuclease domain. Mg(2+)-binding residues include D141, E143, and D315. Residues K390 to T773 form a polymerase domain region. 2 cysteine pairs are disulfide-bonded: C428–C442 and C506–C509.

Belongs to the DNA polymerase type-B family. It depends on Mg(2+) as a cofactor.

The catalysed reaction is DNA(n) + a 2'-deoxyribonucleoside 5'-triphosphate = DNA(n+1) + diphosphate. DNA polymerase activity strongly inhibited by uracil-containing oligonucleotides. In terms of biological role, thermostable DNA polymerase. In addition to polymerase activity, this DNA polymerase exhibits 3' to 5' exonuclease activity. This chain is DNA polymerase (pol), found in Desulfurococcus sp. (strain Tok).